Here is a 146-residue protein sequence, read N- to C-terminus: NADH-quinone oxidoreductase subunit A (146 aa).

3 consecutive transmembrane segments (helical) span residues 14 to 34, 66 to 86, and 96 to 116; these read FAVF…GAFF, FYLV…LYAW, and VGFI…VYLV.

It belongs to the complex I subunit 3 family. In terms of assembly, NDH-1 is composed of 13 different subunits. Subunits NuoA, H, J, K, L, M, N constitute the membrane sector of the complex.

The protein localises to the cell inner membrane. It carries out the reaction a quinone + NADH + 5 H(+)(in) = a quinol + NAD(+) + 4 H(+)(out). In terms of biological role, NDH-1 shuttles electrons from NADH, via FMN and iron-sulfur (Fe-S) centers, to quinones in the respiratory chain. The immediate electron acceptor for the enzyme in this species is believed to be ubiquinone. Couples the redox reaction to proton translocation (for every two electrons transferred, four hydrogen ions are translocated across the cytoplasmic membrane), and thus conserves the redox energy in a proton gradient. In Serratia proteamaculans (strain 568), this protein is NADH-quinone oxidoreductase subunit A.